A 248-amino-acid chain; its full sequence is 14-3-3-like protein G-BOX factor 14 kappa (248 aa).

3 positions are modified to phosphoserine: S70, S112, and S193. T214 bears the Phosphothreonine mark.

Belongs to the 14-3-3 family. Interacts with the isocitrate dehydrogenase IDH3, and malate dehydrogenases MDH1 and MDH2. Interacts with CINV1.

The protein localises to the nucleus. Its subcellular location is the cytoplasm. In terms of biological role, is associated with a DNA binding complex that binds to the G box, a well-characterized cis-acting DNA regulatory element found in plant genes. Involved in the regulation of nutrient metabolism. Negative regulator of freezing tolerance that modulates cold-responsive C-repeat-binding factors (CBF) DREB1A AND DREB1B proteins stability by facilitating their ubiquitin-mediated degradation; this processus is counteracted by B1L. The chain is 14-3-3-like protein G-BOX factor 14 kappa from Arabidopsis thaliana (Mouse-ear cress).